The chain runs to 248 residues: Ribosomal RNA small subunit methyltransferase J (248 aa).

Residues 98–99, 114–115, 150–151, and aspartate 168 contribute to the S-adenosyl-L-methionine site; these read RD, ER, and SS.

The protein belongs to the methyltransferase superfamily. RsmJ family.

Its subcellular location is the cytoplasm. It catalyses the reaction guanosine(1516) in 16S rRNA + S-adenosyl-L-methionine = N(2)-methylguanosine(1516) in 16S rRNA + S-adenosyl-L-homocysteine + H(+). Functionally, specifically methylates the guanosine in position 1516 of 16S rRNA. The protein is Ribosomal RNA small subunit methyltransferase J of Shewanella baltica (strain OS223).